Reading from the N-terminus, the 255-residue chain is tRNA pseudouridine synthase A (255 aa).

Aspartate 56 acts as the Nucleophile in catalysis. Tyrosine 114 provides a ligand contact to substrate.

Belongs to the tRNA pseudouridine synthase TruA family. Homodimer.

The enzyme catalyses uridine(38/39/40) in tRNA = pseudouridine(38/39/40) in tRNA. Its function is as follows. Formation of pseudouridine at positions 38, 39 and 40 in the anticodon stem and loop of transfer RNAs. The protein is tRNA pseudouridine synthase A of Methylacidiphilum infernorum (isolate V4) (Methylokorus infernorum (strain V4)).